The following is a 243-amino-acid chain: Uridylate kinase (243 aa).

ATP is bound at residue 18–21; it reads KLGG. Residue Gly-59 participates in UMP binding. Residues Gly-60 and Arg-64 each coordinate ATP. UMP contacts are provided by residues Asp-79 and 140–147; that span reads MGMPYFST. ATP contacts are provided by Tyr-173 and Asp-176.

It belongs to the UMP kinase family. As to quaternary structure, homohexamer.

It localises to the cytoplasm. The catalysed reaction is UMP + ATP = UDP + ADP. It participates in pyrimidine metabolism; CTP biosynthesis via de novo pathway; UDP from UMP (UMPK route): step 1/1. Its activity is regulated as follows. Inhibited by UTP. Catalyzes the reversible phosphorylation of UMP to UDP. The chain is Uridylate kinase from Corynebacterium efficiens (strain DSM 44549 / YS-314 / AJ 12310 / JCM 11189 / NBRC 100395).